The chain runs to 518 residues: Glutamate--cysteine ligase (518 aa).

Belongs to the glutamate--cysteine ligase type 1 family. Type 1 subfamily.

It catalyses the reaction L-cysteine + L-glutamate + ATP = gamma-L-glutamyl-L-cysteine + ADP + phosphate + H(+). It participates in sulfur metabolism; glutathione biosynthesis; glutathione from L-cysteine and L-glutamate: step 1/2. The sequence is that of Glutamate--cysteine ligase from Salmonella gallinarum (strain 287/91 / NCTC 13346).